Reading from the N-terminus, the 207-residue chain is GTP-binding protein Rheb homolog 1 (207 aa).

Residues glycine 25, lysine 26, serine 27, tyrosine 42, threonine 45, asparagine 126, aspartate 129, and alanine 157 each coordinate GTP. Serine 27 lines the Mg(2+) pocket. Residues 42–50 (YESTIEDQH) carry the Effector region motif. Threonine 45 is a Mg(2+) binding site. Positions 180–193 (NLSPTERPNGNSPK) are enriched in polar residues. The interval 180–207 (NLSPTERPNGNSPKRNPFKDDGKPCSIS) is disordered. A compositionally biased stretch (basic and acidic residues) spans 196–207 (PFKDDGKPCSIS). Cysteine methyl ester is present on cysteine 204. Cysteine 204 carries the S-farnesyl cysteine lipid modification. Residues 205–207 (SIS) constitute a propeptide, removed in mature form.

The protein belongs to the small GTPase superfamily. Rheb family.

It is found in the cell membrane. It catalyses the reaction GTP + H2O = GDP + phosphate + H(+). Binds GTP and exhibits intrinsic GTPase activity. The protein is GTP-binding protein Rheb homolog 1 (rheb-1) of Caenorhabditis elegans.